The sequence spans 309 residues: Probable manganese-dependent inorganic pyrophosphatase (309 aa).

Mn(2+) contacts are provided by His-9, Asp-13, Asp-15, Asp-75, His-97, and Asp-149.

The protein belongs to the PPase class C family. It depends on Mn(2+) as a cofactor.

The protein localises to the cytoplasm. It catalyses the reaction diphosphate + H2O = 2 phosphate + H(+). The chain is Probable manganese-dependent inorganic pyrophosphatase from Bacillus cereus (strain ATCC 10987 / NRS 248).